The primary structure comprises 230 residues: MSLPADLLLGAISSLLRNPPTSDAASPSADQPAVSSSRSDSRLVSAPLPAAPPAPTAIARNPRVSIHLPFQFLWYDITGTESSYTSLSIASRPEVVTVARPYRHARLTSLEAFVQPTASSATYPQTVDLCWTIDSVTPARSEILSVFGAQRIAWGSVHFSAPILLPAELSSLNPTIKDSVTYTDCPRLTCGFYRNDACVALGSSAPICGSILIRGVIECSAPINRPTPSS.

Positions 19 to 48 (PPTSDAASPSADQPAVSSSRSDSRLVSAPL) are enriched in low complexity. The interval 19-54 (PPTSDAASPSADQPAVSSSRSDSRLVSAPLPAAPPA) is disordered.

Belongs to the tymoviruses capsid protein family.

It is found in the virion. Functionally, self-assembles to form a T=3 icosahedral capsid composed of 180 copies of the capsid protein. The capsid encapsulates the single-stranded RNA genome. The protein is Capsid protein of Grapevine fleck virus (isolate Italy/MT48) (GFkV).